Reading from the N-terminus, the 292-residue chain is 2-(5''-triphosphoribosyl)-3'-dephosphocoenzyme-A synthase (292 aa).

It belongs to the CitG/MdcB family.

The catalysed reaction is 3'-dephospho-CoA + ATP = 2'-(5''-triphospho-alpha-D-ribosyl)-3'-dephospho-CoA + adenine. Functionally, catalyzes the formation of 2-(5''-triphosphoribosyl)-3'-dephosphocoenzyme-A, the precursor of the prosthetic group of the holo-acyl carrier protein (gamma chain) of citrate lyase, from ATP and dephospho-CoA. The chain is 2-(5''-triphosphoribosyl)-3'-dephosphocoenzyme-A synthase from Escherichia coli O17:K52:H18 (strain UMN026 / ExPEC).